We begin with the raw amino-acid sequence, 182 residues long: Adenine phosphoribosyltransferase (182 aa).

The protein belongs to the purine/pyrimidine phosphoribosyltransferase family. As to quaternary structure, homodimer.

It localises to the cytoplasm. It carries out the reaction AMP + diphosphate = 5-phospho-alpha-D-ribose 1-diphosphate + adenine. The protein operates within purine metabolism; AMP biosynthesis via salvage pathway; AMP from adenine: step 1/1. Catalyzes a salvage reaction resulting in the formation of AMP, that is energically less costly than de novo synthesis. This Wolinella succinogenes (strain ATCC 29543 / DSM 1740 / CCUG 13145 / JCM 31913 / LMG 7466 / NCTC 11488 / FDC 602W) (Vibrio succinogenes) protein is Adenine phosphoribosyltransferase.